The following is a 409-amino-acid chain: 3-dehydro-bile acid delta(4,6)-reductase (409 aa).

6 residues coordinate FAD: Ser-12, Glu-33, Val-131, Glu-378, Asn-390, and Leu-391.

It belongs to the BaiN/RdsA family. BaiN subfamily. FAD serves as cofactor.

It catalyses the reaction 3-oxocholan-24-oyl-CoA + NAD(+) = 3-oxochol-4-en-24-oyl-CoA + NADH + H(+). The catalysed reaction is 3-oxochol-4-en-24-oyl-CoA + NAD(+) = 3-oxochol-4,6-dien-24-oyl-CoA + NADH + H(+). It carries out the reaction 12alpha-hydroxy-3-oxocholan-24-oyl-CoA + NAD(+) = 12alpha-hydroxy-3-oxochol-4-en-24-oyl-CoA + NADH + H(+). The enzyme catalyses 12alpha-hydroxy-3-oxochol-4-en-24-oyl-CoA + NAD(+) = 12alpha-hydroxy-3-oxochola-4,6-dien-24-oyl-CoA + NADH + H(+). It participates in lipid metabolism; bile acid degradation. Functionally, involved in the secondary bile acid metabolism. Catalyzes two subsequent reductions of the double bonds within the bile acid A/B rings of 3-oxochol-4,6-dien-24-oyl-CoA and 12alpha-hydroxy-3-oxochol-4,6-dien-24-oyl-CoA to yield 3-oxocholan-24-oyl-CoA and 12alpha-hydroxy-3-oxocholan-24-oyl-CoA, respectively. The protein is 3-dehydro-bile acid delta(4,6)-reductase of Clostridium scindens (strain ATCC 35704 / DSM 5676 / VPI 13733 / 19).